We begin with the raw amino-acid sequence, 110 residues long: Single-stranded DNA-binding protein 1 (110 aa).

Residues 1-104 (MNKILLIGRM…VVGEEVQFLE (104 aa)) enclose the SSB domain.

Homotetramer.

This Clostridium acetobutylicum (strain ATCC 824 / DSM 792 / JCM 1419 / IAM 19013 / LMG 5710 / NBRC 13948 / NRRL B-527 / VKM B-1787 / 2291 / W) protein is Single-stranded DNA-binding protein 1 (ssb1).